A 58-amino-acid chain; its full sequence is Small ribosomal subunit protein bS21 (58 aa).

The segment at 37–58 (FYDKPSVKKRAKSKAAAKYRGR) is disordered. Positions 43-58 (VKKRAKSKAAAKYRGR) are enriched in basic residues.

It belongs to the bacterial ribosomal protein bS21 family.

This Chlamydia muridarum (strain MoPn / Nigg) protein is Small ribosomal subunit protein bS21 (rpsU).